Consider the following 435-residue polypeptide: Adenylosuccinate synthetase (435 aa).

GTP is bound by residues 11 to 17 (GDEGKGK) and 39 to 41 (GHT). The Proton acceptor role is filled by Asp12. Residues Asp12 and Gly39 each contribute to the Mg(2+) site. Residues 12-15 (DEGK), 37-40 (NAGH), Thr134, Arg148, Asn230, Thr245, and Arg309 each bind IMP. His40 acts as the Proton donor in catalysis. 305–311 (VTTGRKR) is a binding site for substrate. Residues Arg311, 337–339 (KLD), and 419–421 (GTG) contribute to the GTP site.

Belongs to the adenylosuccinate synthetase family. Homodimer. It depends on Mg(2+) as a cofactor.

The protein resides in the cytoplasm. It carries out the reaction IMP + L-aspartate + GTP = N(6)-(1,2-dicarboxyethyl)-AMP + GDP + phosphate + 2 H(+). It participates in purine metabolism; AMP biosynthesis via de novo pathway; AMP from IMP: step 1/2. In terms of biological role, plays an important role in the de novo pathway and in the salvage pathway of purine nucleotide biosynthesis. Catalyzes the first committed step in the biosynthesis of AMP from IMP. The protein is Adenylosuccinate synthetase of Zygosaccharomyces rouxii (strain ATCC 2623 / CBS 732 / NBRC 1130 / NCYC 568 / NRRL Y-229).